The chain runs to 175 residues: Nucleoside triphosphate/diphosphate phosphatase (175 aa).

The active-site Proton donor is Arg23. Residues Asn87, Asp103, Asp105, Asp107, Asp120, and Glu123 each contribute to the Mg(2+) site.

This sequence belongs to the Ntdp family. Mg(2+) serves as cofactor.

The enzyme catalyses a ribonucleoside 5'-triphosphate + H2O = a ribonucleoside 5'-diphosphate + phosphate + H(+). The catalysed reaction is a ribonucleoside 5'-diphosphate + H2O = a ribonucleoside 5'-phosphate + phosphate + H(+). In terms of biological role, has nucleoside phosphatase activity towards nucleoside triphosphates and nucleoside diphosphates. This is Nucleoside triphosphate/diphosphate phosphatase from Shouchella clausii (strain KSM-K16) (Alkalihalobacillus clausii).